We begin with the raw amino-acid sequence, 196 residues long: Large ribosomal subunit protein mL66 (196 aa).

A mitochondrion-targeting transit peptide spans Met1–Gly34.

This sequence belongs to the bacterial ribosomal protein bS18 family. Mitochondrion-specific ribosomal protein mL66 subfamily. Component of the mitochondrial ribosome small subunit (28S) which comprises a 12S rRNA and about 30 distinct proteins.

The protein resides in the mitochondrion. The sequence is that of Large ribosomal subunit protein mL66 (MRPS18A) from Bos taurus (Bovine).